Consider the following 225-residue polypeptide: Cold-regulated 413 inner membrane protein 1, chloroplastic (225 aa).

A chloroplast-targeting transit peptide spans 1–76; the sequence is MASLCLSSSR…RKRGSSVVCY (76 aa). Residue alanine 77 is a topological domain, stromal. A helical membrane pass occupies residues 78 to 98; sequence APISANSLQWISTISCLALML. Over 99-102 the chain is Chloroplast intermembrane; it reads ARGT. The chain crosses the membrane as a helical span at residues 103–123; it reads GIHKSVVVPLFALHAPSSIVA. Over 124–128 the chain is Stromal; it reads WIKGE. The helical transmembrane segment at 129 to 149 threads the bilayer; that stretch reads YGVWAAFLALIARLFFTFPGE. Topologically, residues 150–151 are chloroplast intermembrane; that stretch reads LE. Residues 152-172 traverse the membrane as a helical segment; it reads LPFIALLLVIVAPYQVMNIRG. The Stromal portion of the chain corresponds to 173–175; the sequence is KQE. Residues 176–196 form a helical membrane-spanning segment; sequence GAIIAIAISGFLAFQHFSRAG. Over 197 to 204 the chain is Chloroplast intermembrane; it reads SLEKAYEK. The chain crosses the membrane as a helical span at residues 205 to 225; sequence GSVLATVAIIGVTVVSLLLLL.

Belongs to the Cold-regulated 413 protein family.

The protein resides in the plastid. It is found in the chloroplast inner membrane. This chain is Cold-regulated 413 inner membrane protein 1, chloroplastic (COR413IM1), found in Arabidopsis thaliana (Mouse-ear cress).